The chain runs to 1241 residues: Anion exchange protein 2 (1241 aa).

Residues 1–240 (MSSAPRRPAK…RSYNLQERRR (240 aa)) form a disordered region. At 1–707 (MSSAPRRPAK…SDFRDALDPQ (707 aa)) the chain is on the cytoplasmic side. Basic and acidic residues-rich tracts occupy residues 37–49 (ELHR…RFEE) and 58–75 (GGEE…EYHR). Composition is skewed to basic residues over residues 76 to 85 (QSSHHIHHPL) and 94 to 110 (RRRK…RRRP). 6 positions are modified to phosphoserine: S113, S132, S144, S170, S172, and S173. Acidic residues predominate over residues 120–133 (TIEEGEEDEDEASE). The segment covering 141–155 (TQPSPVSTPSSVQFF) has biased composition (low complexity). Phosphothreonine is present on T183. A compositionally biased stretch (low complexity) spans 189-209 (GAQAGTQVEEAEAEAVAVASG). Residues 210–219 (TAGGDDGGAS) show a composition bias toward gly residues. S243 bears the Phosphoserine mark. Residue T257 is modified to Phosphothreonine. K274 carries the N6-methyllysine modification. The segment at 288 to 320 (LVRKNAKGSTQSGREGREPGPTPRARPRAPHKP) is disordered. The residue at position 443 (S443) is a Phosphoserine. A disordered region spans residues 449–471 (SLLGHHHGQGAESDPHVTEPLMG). Helical transmembrane passes span 708-731 (CLAA…GLLG), 737-774 (LIGV…LLVF), 784-816 (SNHL…SFLV), and 826-847 (IFAF…VKIF). The interval 708-1241 (CLAAVIFIYF…DEYNEMPMPV (534 aa)) is membrane (anion exchange). Residues 848–900 (QEHPLHGCSASNSSEVDGGENMTWAGARPTLGPGNRSLAGQSGQGKPRGQPNT) are Extracellular-facing. N-linked (GlcNAc...) asparagine glycosylation is found at N859, N868, and N882. The helical transmembrane segment at 901 to 918 (ALLSLVLMAGTFFIAFFL) threads the bilayer. The Cytoplasmic portion of the chain corresponds to 919–933 (RKFKNSRFFPGRIRR). The next 5 membrane-spanning stretches (helical) occupy residues 934–954 (VIGD…DYSI), 988–1010 (PFPV…LIFM), 1036–1059 (LLLI…AATV), 1091–1136 (VTGL…IQFY), and 1163–1199 (MHLF…TVPL). The S-palmitoyl cysteine moiety is linked to residue C1173.

Belongs to the anion exchanger (TC 2.A.31) family. As to expression, expressed in the liver, stomach, kidney, prostate, thyroid and rectum. In terms of tissue distribution, expressed in the liver and kidney.

It localises to the apical cell membrane. Its subcellular location is the basolateral cell membrane. The enzyme catalyses hydrogencarbonate(in) + chloride(out) = hydrogencarbonate(out) + chloride(in). Its function is as follows. Sodium-independent anion exchanger which mediates the electroneutral exchange of chloride for bicarbonate ions across the cell membrane. Plays an important role in osteoclast differentiation and function. Regulates bone resorption and calpain-dependent actin cytoskeleton organization in osteoclasts via anion exchange-dependent control of pH. Essential for intracellular pH regulation in CD8(+) T-cells upon CD3 stimulation, modulating CD8(+) T-cell responses. The polypeptide is Anion exchange protein 2 (SLC4A2) (Homo sapiens (Human)).